The following is a 676-amino-acid chain: Potassium-transporting ATPase ATP-binding subunit (676 aa).

The next 4 membrane-spanning stretches (helical) occupy residues Asn-24 to Pro-44, Met-45 to Phe-65, Ile-212 to Thr-232, and Ser-246 to Ile-266. The active-site 4-aspartylphosphate intermediate is Asp-302. Residues Asp-339, Glu-343, Phe-372–Ser-379, and Lys-390 contribute to the ATP site. Asp-513 and Asp-517 together coordinate Mg(2+). 3 consecutive transmembrane segments (helical) span residues Phe-573 to Ile-593, Ala-611 to Leu-631, and Gly-656 to Leu-676.

The protein belongs to the cation transport ATPase (P-type) (TC 3.A.3) family. Type IA subfamily. As to quaternary structure, the system is composed of three essential subunits: KdpA, KdpB and KdpC.

It is found in the cell membrane. The enzyme catalyses K(+)(out) + ATP + H2O = K(+)(in) + ADP + phosphate + H(+). Its function is as follows. Part of the high-affinity ATP-driven potassium transport (or Kdp) system, which catalyzes the hydrolysis of ATP coupled with the electrogenic transport of potassium into the cytoplasm. This subunit is responsible for energy coupling to the transport system and for the release of the potassium ions to the cytoplasm. This Enterococcus faecalis (strain ATCC 700802 / V583) protein is Potassium-transporting ATPase ATP-binding subunit.